The chain runs to 100 residues: Small ribosomal subunit protein uS14c (100 aa).

This sequence belongs to the universal ribosomal protein uS14 family. As to quaternary structure, part of the 30S ribosomal subunit.

Its subcellular location is the plastid. The protein resides in the chloroplast. Binds 16S rRNA, required for the assembly of 30S particles. The protein is Small ribosomal subunit protein uS14c of Draba nemorosa (Woodland whitlowgrass).